The following is a 236-amino-acid chain: MSSSKYKRVMLKISGEALSGKKGFGFDFDVTQRIAKEIKEIVDMGIEVGAVVGGGNIWRGRNGEEMDRTTADYMGMLATCINALALQDSLENIGVKTRVQTAIEMKEVAEPFIRRRAMRHLEKKRVVIFAAGTGNPYFSTDTTAALRAAEIEADAILLAKKVDGVYDKDPNKYDDAKKFDKLTYIEVLEKGLQVMDSTATSLCMDNNIPILVFGLDKPNNIKKVIMGEQIGTIVSK.

12–15 (KISG) is a binding site for ATP. Residues 20 to 25 (GKKGFG) form an involved in allosteric activation by GTP region. A UMP-binding site is contributed by glycine 54. 2 residues coordinate ATP: glycine 55 and arginine 59. UMP-binding positions include aspartate 72 and 133–140 (TGNPYFST). Residues tyrosine 166 and aspartate 169 each coordinate ATP.

The protein belongs to the UMP kinase family. In terms of assembly, homohexamer.

It localises to the cytoplasm. It carries out the reaction UMP + ATP = UDP + ADP. It participates in pyrimidine metabolism; CTP biosynthesis via de novo pathway; UDP from UMP (UMPK route): step 1/1. With respect to regulation, allosterically activated by GTP. Inhibited by UTP. In terms of biological role, catalyzes the reversible phosphorylation of UMP to UDP. The chain is Uridylate kinase from Clostridium novyi (strain NT).